We begin with the raw amino-acid sequence, 424 residues long: Glutamate-1-semialdehyde 2,1-aminomutase (424 aa).

N6-(pyridoxal phosphate)lysine is present on Lys-263.

This sequence belongs to the class-III pyridoxal-phosphate-dependent aminotransferase family. HemL subfamily. Homodimer. Requires pyridoxal 5'-phosphate as cofactor.

The protein resides in the cytoplasm. The catalysed reaction is (S)-4-amino-5-oxopentanoate = 5-aminolevulinate. The protein operates within porphyrin-containing compound metabolism; protoporphyrin-IX biosynthesis; 5-aminolevulinate from L-glutamyl-tRNA(Glu): step 2/2. The protein is Glutamate-1-semialdehyde 2,1-aminomutase of Campylobacter jejuni subsp. jejuni serotype O:6 (strain 81116 / NCTC 11828).